We begin with the raw amino-acid sequence, 518 residues long: Xylose import ATP-binding protein XylG (518 aa).

ABC transporter domains follow at residues 6-245 and 262-507; these read LQMN…VGRE and FEAR…LSQP. 38 to 45 contributes to the ATP binding site; sequence GENGAGKS.

The protein belongs to the ABC transporter superfamily. Xylose importer (TC 3.A.1.2.4) family. As to quaternary structure, the complex is composed of two ATP-binding proteins (XylG), two transmembrane proteins (XylH) and a solute-binding protein (XylF).

Its subcellular location is the cell inner membrane. It catalyses the reaction D-xylose(out) + ATP + H2O = D-xylose(in) + ADP + phosphate + H(+). In terms of biological role, part of the ABC transporter complex XylFGH involved in xylose import. Responsible for energy coupling to the transport system. In Pseudomonas fluorescens (strain Pf0-1), this protein is Xylose import ATP-binding protein XylG.